The sequence spans 320 residues: Aspartate carbamoyltransferase catalytic subunit (320 aa).

R68 and T69 together coordinate carbamoyl phosphate. K96 provides a ligand contact to L-aspartate. Carbamoyl phosphate-binding residues include R118, H148, and Q151. 2 residues coordinate L-aspartate: R181 and R236. Positions 277 and 278 each coordinate carbamoyl phosphate.

This sequence belongs to the aspartate/ornithine carbamoyltransferase superfamily. ATCase family. As to quaternary structure, heterododecamer (2C3:3R2) of six catalytic PyrB chains organized as two trimers (C3), and six regulatory PyrI chains organized as three dimers (R2).

The catalysed reaction is carbamoyl phosphate + L-aspartate = N-carbamoyl-L-aspartate + phosphate + H(+). It participates in pyrimidine metabolism; UMP biosynthesis via de novo pathway; (S)-dihydroorotate from bicarbonate: step 2/3. Its function is as follows. Catalyzes the condensation of carbamoyl phosphate and aspartate to form carbamoyl aspartate and inorganic phosphate, the committed step in the de novo pyrimidine nucleotide biosynthesis pathway. The chain is Aspartate carbamoyltransferase catalytic subunit from Methylibium petroleiphilum (strain ATCC BAA-1232 / LMG 22953 / PM1).